A 130-amino-acid polypeptide reads, in one-letter code: Protachykinin-1 (130 aa).

Residues 1–19 form the signal peptide; it reads MKILVAVAVFFLVSTQLFA. Residues 20-56 constitute a propeptide that is removed on maturation; it reads EEIDANDDLNYWSDWSDSDQIKEAMPEPFEHLLQRIA. Methionine 68 and methionine 107 each carry methionine amide.

This sequence belongs to the tachykinin family. In terms of processing, the substance P form is cleaved at Pro-59 by the prolyl endopeptidase FAP (seprase) activity (in vitro). Substance P is also cleaved and degraded by Angiotensin-converting enzyme (ACE) and neprilysin (MME).

The protein localises to the secreted. Its function is as follows. Tachykinins are active peptides which excite neurons, evoke behavioral responses, are potent vasodilators and secretagogues, and contract (directly or indirectly) many smooth muscles. The sequence is that of Protachykinin-1 (Tac1) from Mus musculus (Mouse).